Consider the following 907-residue polypeptide: Avirulence protein A (907 aa).

Composition is skewed to polar residues over residues 1 to 11 (MWNVSKSSNNL) and 124 to 136 (AGSN…SSDP). Disordered stretches follow at residues 1–47 (MWNV…HDQL) and 116–157 (NDDF…KKSY).

The protein is Avirulence protein A (avrA) of Pseudomonas savastanoi pv. glycinea (Pseudomonas syringae pv. glycinea).